Here is a 485-residue protein sequence, read N- to C-terminus: Cysteine--tRNA ligase (485 aa).

Zn(2+) is bound at residue Cys-27. The 'HIGH' region signature appears at 29 to 39 (ITAYDLCHIGH). Zn(2+)-binding residues include Cys-208, His-233, and Glu-237. Residues 265 to 269 (KMSKS) carry the 'KMSKS' region motif. Residue Lys-268 coordinates ATP.

This sequence belongs to the class-I aminoacyl-tRNA synthetase family. As to quaternary structure, monomer. Zn(2+) is required as a cofactor.

It localises to the cytoplasm. It catalyses the reaction tRNA(Cys) + L-cysteine + ATP = L-cysteinyl-tRNA(Cys) + AMP + diphosphate. This is Cysteine--tRNA ligase from Nitratidesulfovibrio vulgaris (strain DSM 19637 / Miyazaki F) (Desulfovibrio vulgaris).